Here is a 64-residue protein sequence, read N- to C-terminus: Small ribosomal subunit protein eS17 (64 aa).

Belongs to the eukaryotic ribosomal protein eS17 family.

This Halorubrum lacusprofundi (strain ATCC 49239 / DSM 5036 / JCM 8891 / ACAM 34) protein is Small ribosomal subunit protein eS17.